Consider the following 338-residue polypeptide: Anthranilate phosphoribosyltransferase (338 aa).

Residues Gly81, 84–85 (GD), Ser89, 91–94 (NIST), 109–117 (KHGNRSVSS), and Ser121 contribute to the 5-phospho-alpha-D-ribose 1-diphosphate site. Gly81 provides a ligand contact to anthranilate. Mg(2+) is bound at residue Ser93. Residue Asn112 coordinates anthranilate. Arg167 contributes to the anthranilate binding site. Mg(2+) contacts are provided by Asp226 and Glu227.

It belongs to the anthranilate phosphoribosyltransferase family. As to quaternary structure, homodimer. Mg(2+) serves as cofactor.

The enzyme catalyses N-(5-phospho-beta-D-ribosyl)anthranilate + diphosphate = 5-phospho-alpha-D-ribose 1-diphosphate + anthranilate. Its pathway is amino-acid biosynthesis; L-tryptophan biosynthesis; L-tryptophan from chorismate: step 2/5. Catalyzes the transfer of the phosphoribosyl group of 5-phosphorylribose-1-pyrophosphate (PRPP) to anthranilate to yield N-(5'-phosphoribosyl)-anthranilate (PRA). This Thioalkalivibrio sulfidiphilus (strain HL-EbGR7) protein is Anthranilate phosphoribosyltransferase.